A 267-amino-acid polypeptide reads, in one-letter code: LexA repressor (267 aa).

Residues Met1 to Arg44 form a disordered region. A compositionally biased stretch (basic and acidic residues) spans Pro20 to Lys38. Positions Ile65–Thr85 form a DNA-binding region, H-T-H motif. The segment at Gly111–Glu140 is disordered. Residues Gln112–Ser129 show a composition bias toward polar residues. Catalysis depends on for autocatalytic cleavage activity residues Ser191 and Lys228.

Belongs to the peptidase S24 family. As to quaternary structure, homodimer.

The catalysed reaction is Hydrolysis of Ala-|-Gly bond in repressor LexA.. Represses a number of genes involved in the response to DNA damage (SOS response), including recA and lexA. In the presence of single-stranded DNA, RecA interacts with LexA causing an autocatalytic cleavage which disrupts the DNA-binding part of LexA, leading to derepression of the SOS regulon and eventually DNA repair. This is LexA repressor from Corynebacterium jeikeium (strain K411).